A 197-amino-acid chain; its full sequence is MTAATKATEYPSAVAKARFVRVSPRKARRVIDLVRGRSVSDALDILRWAPQAASGPVAKVIASAAANAQNNGGLDPATLVVATVYADQGPTAKRIRPRAQGRAFRIRRRTSHITVVVESRPAKDQRSAKSSRARRTEASKAASKVGATAPAKKAAAKAPAKKAPASSGVKKTPAKKAPAKKAPAKASETSAAKGGSD.

The disordered stretch occupies residues 118-197; it reads ESRPAKDQRS…ETSAAKGGSD (80 aa). Residues 149–165 are compositionally biased toward low complexity; that stretch reads APAKKAAAKAPAKKAPA. Residues 172-183 are compositionally biased toward basic residues; sequence TPAKKAPAKKAP. The span at 184 to 197 shows a compositional bias: low complexity; the sequence is AKASETSAAKGGSD.

The protein belongs to the universal ribosomal protein uL22 family. As to quaternary structure, part of the 50S ribosomal subunit.

This protein binds specifically to 23S rRNA; its binding is stimulated by other ribosomal proteins, e.g. L4, L17, and L20. It is important during the early stages of 50S assembly. It makes multiple contacts with different domains of the 23S rRNA in the assembled 50S subunit and ribosome. Functionally, the globular domain of the protein is located near the polypeptide exit tunnel on the outside of the subunit, while an extended beta-hairpin is found that lines the wall of the exit tunnel in the center of the 70S ribosome. This Mycobacterium bovis (strain ATCC BAA-935 / AF2122/97) protein is Large ribosomal subunit protein uL22.